A 713-amino-acid chain; its full sequence is Macrophage-expressed gene 1 protein (713 aa).

The first 19 residues, 1 to 19, serve as a signal peptide directing secretion; sequence MNSFMALVLIWMIIACAEA. The MACPF domain maps to 30-345; the sequence is GFQICKNALK…TAVRHYYTFN (316 aa). Residues Cys-34 and Cys-70 are joined by a disulfide bond. The next 2 beta stranded transmembrane spans lie at 113–120 and 127–132; these read LSINTELA and GKFSTE. Residue Asn-185 is glycosylated (N-linked (GlcNAc...) asparagine). Beta stranded transmembrane passes span 235-244 and 248-256; these read TVTASAGIAF and VNFKVETDY. Asn-269 carries N-linked (GlcNAc...) asparagine glycosylation. A disulfide bridge links Cys-350 with Cys-369. N-linked (GlcNAc...) asparagine glycosylation occurs at Asn-375. 5 cysteine pairs are disulfide-bonded: Cys-385-Cys-394, Cys-432-Cys-446, Cys-436-Cys-442, Cys-531-Cys-569, and Cys-554-Cys-574. The segment at 410 to 653 is P2; it reads PPGYSPVHLL…GDSNGMSGGE (244 aa). Residues 654-674 traverse the membrane as a helical segment; the sequence is AAGITLGVTIALGIVITLAIY.

It belongs to the MPEG1 family. In terms of assembly, homooligomer; predominantly forms a homooligomeric arc-shaped pore complex instead of complete rings of 16 subunits. Proteolytically processed in two steps to generate the Macrophage-expressed gene 1 protein, processed form: cleaved by trypsin in proximity of the helical transmembrane domain releases the ectodomain into the lysosomal lumen to orient the pore-forming domain toward the endogenous membranes, and processed by the asparagine endopeptidase (LGMN). Proteolytic processing in antigen-containing vesicles is pH-dependent. In terms of processing, monoubiquitinated in response to bacterial infection; ubiquitination is required for vesicular localization and antibacterial activity and can be blocked by bacterial cell cycle inhibiting factor (cif). As to expression, expressed constitutively in a variety of cell types including macrophages, microglia, neutrophils, T cells, marginal zone B cells, keratinocytes, splenocytes and intestinal epithelial cells.

The protein resides in the cytoplasmic vesicle membrane. It localises to the cytoplasmic vesicle. It is found in the phagosome membrane. Forms arc- and ring-shaped pre-pores on top of the membrane at neutral to slightly acidic pH conditions and converts to pores upon acidification. Undergoes transition from the pre-pore to the pore in a processive clockwise hand-over-hand process. In the pore state, 2 alpha-helical regions refold into transmembrane hairpins (TMH1 and TMH2) in each protomer that form in the ensemble complex giant beta-barrel transmembrane pores. Its function is as follows. Pore-forming protein involved in both innate and adaptive immunity. Plays a central role in antigen cross-presentation in dendritic cells by forming a pore in antigen-containing compartments, thereby promoting delivery of antigens for cross-presentation. Also involved in innate immune response following bacterial infection; shows antibacterial activity against a wide spectrum of Gram-positive, Gram-negative and acid-fast bacteria. Reduces the viability of the intracytosolic pathogen L.monocytogenes by inhibiting acidification of the phagocytic vacuole of host cells which restricts bacterial translocation from the vacuole to the cytosol. Required for the antibacterial activity of reactive oxygen species and nitric oxide. In terms of biological role, pore-forming protein that plays a central role in antigen cross-presentation in dendritic cells by mediating delivery of antigens for cross-presentation. Dendritic cells bridge innate and adaptive immunity by capturing exogenous antigens on MHC class-I molecules and presenting them to naive CD8(+) T-cells. Acts by forming a pore in antigen-containing compartments, promoting the release of antigens into the cytosol, enabling generation of MHCI:peptide complexes and T-cell priming. This is Macrophage-expressed gene 1 protein from Mus musculus (Mouse).